The primary structure comprises 71 residues: UPF0346 protein SPT_1257 (71 aa).

It belongs to the UPF0346 family.

The protein is UPF0346 protein SPT_1257 of Streptococcus pneumoniae (strain Taiwan19F-14).